The primary structure comprises 634 residues: 1-deoxy-D-xylulose-5-phosphate synthase (634 aa).

Thiamine diphosphate-binding positions include H74 and 115-117; that span reads AHS. A Mg(2+)-binding site is contributed by D146. Thiamine diphosphate is bound by residues 147–148, N176, Y283, and E365; that span reads GA. N176 contributes to the Mg(2+) binding site.

The protein belongs to the transketolase family. DXPS subfamily. As to quaternary structure, homodimer. Mg(2+) serves as cofactor. It depends on thiamine diphosphate as a cofactor.

The catalysed reaction is D-glyceraldehyde 3-phosphate + pyruvate + H(+) = 1-deoxy-D-xylulose 5-phosphate + CO2. Its pathway is metabolic intermediate biosynthesis; 1-deoxy-D-xylulose 5-phosphate biosynthesis; 1-deoxy-D-xylulose 5-phosphate from D-glyceraldehyde 3-phosphate and pyruvate: step 1/1. Functionally, catalyzes the acyloin condensation reaction between C atoms 2 and 3 of pyruvate and glyceraldehyde 3-phosphate to yield 1-deoxy-D-xylulose-5-phosphate (DXP). In Burkholderia cenocepacia (strain ATCC BAA-245 / DSM 16553 / LMG 16656 / NCTC 13227 / J2315 / CF5610) (Burkholderia cepacia (strain J2315)), this protein is 1-deoxy-D-xylulose-5-phosphate synthase.